A 608-amino-acid chain; its full sequence is Replication protein E1 (608 aa).

Positions 83–85 (KRK) match the Nuclear localization signal motif. S88 and S96 each carry phosphoserine; by host. Residues 148–311 (QGGVGSGHYT…TMIHHQTADS (164 aa)) form a DNA-binding region region. The region spanning 410 to 560 (LNFIVFLDKF…FPFDANDTPL (151 aa)) is the SF3 helicase domain. 436 to 443 (GPPDTGKS) serves as a coordination point for ATP. A Glycyl lysine isopeptide (Lys-Gly) (interchain with G-Cter in SUMO) cross-link involves residue K517.

This sequence belongs to the papillomaviridae E1 protein family. In terms of assembly, can form hexamers. Interacts with E2 protein; this interaction increases E1 DNA binding specificity. Interacts with host DNA polymerase subunit POLA2. Interacts with host single stranded DNA-binding protein RPA1. Interacts with host TOP1; this interaction stimulates the enzymatic activity of TOP1. Phosphorylated. Post-translationally, sumoylated.

The protein localises to the host nucleus. It carries out the reaction Couples ATP hydrolysis with the unwinding of duplex DNA by translocating in the 3'-5' direction.. The enzyme catalyses ATP + H2O = ADP + phosphate + H(+). ATP-dependent DNA 3'-5' helicase required for initiation of viral DNA replication. It forms a complex with the viral E2 protein. The E1-E2 complex binds to the replication origin which contains binding sites for both proteins. During the initial step, a dimer of E1 interacts with a dimer of protein E2 leading to a complex that binds the viral origin of replication with high specificity. Then, a second dimer of E1 displaces the E2 dimer in an ATP-dependent manner to form the E1 tetramer. Following this, two E1 monomers are added to each half of the site, which results in the formation of two E1 trimers on the viral ori. Subsequently, two hexamers will be created. The double hexamer acts as a bi-directional helicase machinery and unwinds the viral DNA and then recruits the host DNA polymerase to start replication. The polypeptide is Replication protein E1 (Homo sapiens (Human)).